Consider the following 407-residue polypeptide: Divalent metal cation transporter MntH (407 aa).

11 consecutive transmembrane segments (helical) span residues 16–36 (LTLL…GNFA), 43–63 (STFG…AMLV), 95–115 (WVQA…GAAV), 119–139 (LLLG…TWGI), 152–172 (FVVG…LVFS), 193–213 (AVYL…IYLH), 239–259 (IAMT…AAAF), 288–308 (LFGL…TLAG), 318–338 (FTIP…VVIA), 346–366 (ILVL…IPLL), and 387–407 (VGRL…VAMI).

It belongs to the NRAMP family.

The protein resides in the cell inner membrane. H(+)-stimulated, divalent metal cation uptake system. This chain is Divalent metal cation transporter MntH, found in Aeromonas hydrophila subsp. hydrophila (strain ATCC 7966 / DSM 30187 / BCRC 13018 / CCUG 14551 / JCM 1027 / KCTC 2358 / NCIMB 9240 / NCTC 8049).